Reading from the N-terminus, the 71-residue chain is Biotinylated protein TB7.3 homolog (71 aa).

Residues 2–71 (AEDVRAEIVA…QAGDLIAVIS (70 aa)) enclose the Biotinyl-binding domain. Lys37 bears the N6-biotinyllysine mark.

The polypeptide is Biotinylated protein TB7.3 homolog (Mycobacterium leprae (strain TN)).